A 318-amino-acid chain; its full sequence is NADH-ubiquinone oxidoreductase chain 1 (318 aa).

8 consecutive transmembrane segments (helical) span residues 3–23, 69–89, 98–118, 135–155, 171–191, 217–237, 253–273, and 294–314; these read TMNL…LTLV, ILYI…WTPL, FNLG…SILW, AVAQ…SILL, HLWL…STLA, AGPF…MNAL, ELFT…FLWI, and LPLT…ISSI.

Belongs to the complex I subunit 1 family. In terms of assembly, core subunit of respiratory chain NADH dehydrogenase (Complex I) which is composed of 45 different subunits.

It is found in the mitochondrion inner membrane. The catalysed reaction is a ubiquinone + NADH + 5 H(+)(in) = a ubiquinol + NAD(+) + 4 H(+)(out). Its function is as follows. Core subunit of the mitochondrial membrane respiratory chain NADH dehydrogenase (Complex I) which catalyzes electron transfer from NADH through the respiratory chain, using ubiquinone as an electron acceptor. Essential for the catalytic activity and assembly of complex I. The chain is NADH-ubiquinone oxidoreductase chain 1 (MT-ND1) from Papio hamadryas (Hamadryas baboon).